We begin with the raw amino-acid sequence, 309 residues long: Probable L,D-transpeptidase ErfK/SrfK (309 aa).

Positions 1 to 21 (MRRITPFFPFFVLLVSHFSLA) are cleaved as a signal peptide. Residues 96–231 (EGIVVNVAEM…VPVGTRVQII (136 aa)) enclose the L,D-TPase catalytic domain. Catalysis depends on histidine 191, which acts as the Proton donor/acceptor. The Nucleophile role is filled by cysteine 207.

The protein belongs to the YkuD family.

Its subcellular location is the periplasm. It functions in the pathway cell wall biogenesis; peptidoglycan biosynthesis. The polypeptide is Probable L,D-transpeptidase ErfK/SrfK (erfK) (Salmonella typhimurium (strain LT2 / SGSC1412 / ATCC 700720)).